A 694-amino-acid chain; its full sequence is Probable methyltransferase PMT11 (694 aa).

The Cytoplasmic segment spans residues 1–14 (MKPLTNGDLFKSPT). A helical; Signal-anchor for type II membrane protein membrane pass occupies residues 15-32 (LIKISALVFVTVAFFYLG). Residues 33–694 (KHWSDDGYQQ…LTCEKRLLRA (662 aa)) lie on the Lumenal side of the membrane. N-linked (GlcNAc...) asparagine glycans are attached at residues Asn69 and Asn77. Residues 83–128 (IPATIRQQPPSVVADTEKVKVEANPPPPPPPSPSPPPPPGPVKSFG) are disordered. Pro residues predominate over residues 106-123 (NPPPPPPPSPSPPPPPGP). Residues Asn155, Asn378, and Asn423 are each glycosylated (N-linked (GlcNAc...) asparagine).

The protein belongs to the methyltransferase superfamily.

It is found in the golgi apparatus membrane. The polypeptide is Probable methyltransferase PMT11 (Arabidopsis thaliana (Mouse-ear cress)).